We begin with the raw amino-acid sequence, 70 residues long: ATP synthase subunit c (70 aa).

The next 2 helical transmembrane spans lie at 3 to 23 (ALAA…IGIA) and 44 to 64 (LFLI…VIAF).

The protein belongs to the ATPase C chain family. F-type ATPases have 2 components, F(1) - the catalytic core - and F(0) - the membrane proton channel. F(1) has five subunits: alpha(3), beta(3), gamma(1), delta(1), epsilon(1). F(0) has three main subunits: a(1), b(2) and c(10-14). The alpha and beta chains form an alternating ring which encloses part of the gamma chain. F(1) is attached to F(0) by a central stalk formed by the gamma and epsilon chains, while a peripheral stalk is formed by the delta and b chains.

Its subcellular location is the cell membrane. Functionally, f(1)F(0) ATP synthase produces ATP from ADP in the presence of a proton or sodium gradient. F-type ATPases consist of two structural domains, F(1) containing the extramembraneous catalytic core and F(0) containing the membrane proton channel, linked together by a central stalk and a peripheral stalk. During catalysis, ATP synthesis in the catalytic domain of F(1) is coupled via a rotary mechanism of the central stalk subunits to proton translocation. Key component of the F(0) channel; it plays a direct role in translocation across the membrane. A homomeric c-ring of between 10-14 subunits forms the central stalk rotor element with the F(1) delta and epsilon subunits. The polypeptide is ATP synthase subunit c (Caldicellulosiruptor bescii (strain ATCC BAA-1888 / DSM 6725 / KCTC 15123 / Z-1320) (Anaerocellum thermophilum)).